The primary structure comprises 272 residues: HMP-PP phosphatase (272 aa).

The active-site Nucleophile is the Asp8. Positions 8, 10, and 212 each coordinate Mg(2+).

It belongs to the HAD-like hydrolase superfamily. Cof family. Mg(2+) is required as a cofactor.

The enzyme catalyses 4-amino-2-methyl-5-(diphosphooxymethyl)pyrimidine + H2O = 4-amino-2-methyl-5-(phosphooxymethyl)pyrimidine + phosphate + H(+). Catalyzes the hydrolysis of 4-amino-2-methyl-5-hydroxymethylpyrimidine pyrophosphate (HMP-PP) to 4-amino-2-methyl-5-hydroxymethylpyrimidine phosphate (HMP-P). This chain is HMP-PP phosphatase, found in Salmonella newport (strain SL254).